We begin with the raw amino-acid sequence, 335 residues long: L-lactate dehydrogenase B chain (335 aa).

NAD(+)-binding positions include 29-57 (GQVG…VEDK) and Arg99. Substrate contacts are provided by Arg106, Asn138, and Arg169. Asn138 is an NAD(+) binding site. The Proton acceptor role is filled by His193. Substrate is bound at residue Thr248.

It belongs to the LDH/MDH superfamily. LDH family. Homotetramer.

It is found in the cytoplasm. It catalyses the reaction (S)-lactate + NAD(+) = pyruvate + NADH + H(+). It participates in fermentation; pyruvate fermentation to lactate; (S)-lactate from pyruvate: step 1/1. Its function is as follows. Interconverts simultaneously and stereospecifically pyruvate and lactate with concomitant interconversion of NADH and NAD(+). The polypeptide is L-lactate dehydrogenase B chain (LDHB) (Sceloporus undulatus (Eastern fence lizard)).